Reading from the N-terminus, the 472-residue chain is MAGASRLLFLWLGCFCVSLAQGERPKPPFPELRKAVPGDRTAGGGPDSELQPQDKVSEHMLRLYDRYSTVQAARTPGSLEGGSQPWRPRLLREGNTVRSFRAAAAETLERKGLYIFNLTSLTKSENILSATLYFCIGELGNISLSCPVSGGCSHHAQRKHIQIDLSAWTLKFSRNQSQLLGHLSVDMAKSHRDIMSWLSKDITQLLRKAKENEEFLIGFNITSKGRQLPKRRLPFPEPYILVYANDAAISEPESVVSSLQGHRNFPTGTVPKWDSHIRAALSIERRKKRSTGVLLPLQNNELPGAEYQYKKDEVWEERKPYKTLQAQAPEKSKNKKKQRKGPHRKSQTLQFDEQTLKKARRKQWIEPRNCARRYLKVDFADIGWSEWIISPKSFDAYYCSGACQFPMPKSLKPSNHATIQSIVRAVGVVPGIPEPCCVPEKMSSLSILFFDENKNVVLKVYPNMTVESCACR.

Residues 1–22 form the signal peptide; the sequence is MAGASRLLFLWLGCFCVSLAQG. A propeptide spanning residues 23–362 is cleaved from the precursor; the sequence is ERPKPPFPEL…EQTLKKARRK (340 aa). Residues 27 to 37 show a composition bias toward basic and acidic residues; the sequence is PPFPELRKAVP. The tract at residues 27–53 is disordered; it reads PPFPELRKAVPGDRTAGGGPDSELQPQ. Asparagine 117, asparagine 141, asparagine 175, and asparagine 220 each carry an N-linked (GlcNAc...) asparagine glycan. The tract at residues 320–350 is disordered; the sequence is PYKTLQAQAPEKSKNKKKQRKGPHRKSQTLQ. Basic residues predominate over residues 333–346; sequence KNKKKQRKGPHRKS. Disulfide bonds link cysteine 370–cysteine 437, cysteine 399–cysteine 469, and cysteine 403–cysteine 471. Asparagine 463 carries an N-linked (GlcNAc...) asparagine glycan.

Belongs to the TGF-beta family. Homodimer; disulfide-linked. Interacts with type II receptor ACVR2B. As to expression, expressed in adult and fetal cartilage.

The protein localises to the secreted. Its function is as follows. Growth factor of the TGF-beta superfamily that plays an essential role in developmental process by inducing and patterning early skeletal formation and by negatively regulating bone density. Antagonizes the ability of certain osteogenic BMPs to induce osteoprogenitor differentiation and ossification. Initiates signaling cascades by associating with type II receptor ACVR2B to activate SMAD2-dependent and SMAD-independent signaling cascades including TAK1 and JNK pathways. This is Bone morphogenetic protein 3 (BMP3) from Homo sapiens (Human).